The primary structure comprises 546 residues: MAKEIKFSDSARNLLFEGVRQLHDAVKVTMGPRGRNVLIQKSYGAPSITKDGVSVAKEIELSCPVANMGAQLVKEVASKTADAAGDGTTTATVLAYSIFKEGLRNITAGANPIEVKRGMDKAAEAIINELKKASKKVGGKEEITQVATISANSDHNIGKLIADAMEKVGKDGVITVEEAKGIEDELDVVEGMQFDRGYLSPYFVTNAEKMTAQLDNAYILLTDKKISSMKDILPLLEKTMKEGKPLLIIAEDIEGEALTTLVVNKLRGVLNIAAVKAPGFGDRRKEMLKDIAVLTGGQVISEELGLTLENAEVEFLGKAGRIVIDKDNTTIVDGKGHSHDVKDRVAQIKTQIASTTSDYDKEKLQERLAKLSGGVAVIKVGAASEVEMKEKKDRVDDALSATKAAVEEGIVIGGGAALIRAAQKVHLNLHDDEKVGYEIIMRAIKAPLAQIAINAGYDGGVVVNEVQKHEGHFGFNASNGKYVDMFKEGIIDPLKVERIALQNAVSVSSLLLTTEATVHEIKEEKATPAMPDMGGMGGMGGMGGMM.

ATP contacts are provided by residues 29 to 32 (TMGP), Lys-50, 86 to 90 (DGTTT), Gly-414, and Asp-492.

It belongs to the chaperonin (HSP60) family. Forms a cylinder of 14 subunits composed of two heptameric rings stacked back-to-back. Interacts with the co-chaperonin GroES.

The protein resides in the cytoplasm. The catalysed reaction is ATP + H2O + a folded polypeptide = ADP + phosphate + an unfolded polypeptide.. In terms of biological role, together with its co-chaperonin GroES, plays an essential role in assisting protein folding. The GroEL-GroES system forms a nano-cage that allows encapsulation of the non-native substrate proteins and provides a physical environment optimized to promote and accelerate protein folding. The sequence is that of Chaperonin GroEL from Helicobacter pylori (strain Shi470).